The following is an 810-amino-acid chain: Nuclear pore complex protein NUP88 (810 aa).

Positions 1 to 23 are disordered; that stretch reads MKFNFNETEDAPDSRRSPTPKEP. Residues 646-748 adopt a coiled-coil conformation; sequence APNLKRIIDD…RARVKKSTQK (103 aa).

As to quaternary structure, part of the nuclear pore complex (NPC). The NPC has an eight-fold symmetrical structure comprising a central transport channel and two rings, the cytoplasmic and nuclear rings, to which eight filaments are attached. The cytoplasmic filaments have loose ends, while the nuclear filaments are joined in a distal ring, forming a nuclear basket. NPCs are highly dynamic in configuration and composition, and can be devided in 3 subcomplexes, the NUP62 subcomplex, the NUP107-160 subcomplex and the NUP93 subcomplex, containing approximately 30 different nucleoporin proteins.

The protein resides in the nucleus envelope. The protein localises to the nucleus. It is found in the nuclear pore complex. Its function is as follows. Involved in the regulation of exportin-mediated nuclear protein export. Required for resistance mediated by multiple R proteins and for the appropriate nuclear accumulation of SNC1 and of the downstream defense signaling components EDS1 and NPR1. Not involved in salt tolerance, ethylene and auxin responses, but required for systemic acquired resistance. The chain is Nuclear pore complex protein NUP88 from Arabidopsis thaliana (Mouse-ear cress).